We begin with the raw amino-acid sequence, 403 residues long: Heptahelical transmembrane protein ADIPOR3 (403 aa).

The Cytoplasmic portion of the chain corresponds to 1–73 (MAAAAGEEVE…LSAFSIHNET (73 aa)). A helical transmembrane segment spans residues 74 to 94 (LNVWTHLIGFFIFLVLTIYTA). Over 95–209 (TQVPNVVDLQ…QLIRPIPRWP (115 aa)) the chain is Extracellular. A helical transmembrane segment spans residues 210–230 (FYAFLGGAMFCLLASSTCHLL). The Cytoplasmic portion of the chain corresponds to 231 to 246 (SCHSRRLAYIMLRLDY). Residues 247 to 267 (AGIAALIATSFYPPVYYSFMC) traverse the membrane as a helical segment. Residues 268–274 (YPFFCNL) lie on the Extracellular side of the membrane. The chain crosses the membrane as a helical span at residues 275 to 295 (YLSCITILGVATIAFSLLPVF). Residues 296 to 306 (QNPEFRTIRAC) are Cytoplasmic-facing. Residues 307-327 (LFFGMGASGVIPVIHKLILFW) form a helical membrane-spanning segment. The Extracellular segment spans residues 328 to 331 (HQPE). A helical transmembrane segment spans residues 332–352 (ALHTTAYEVLMGLFYGIGALV). Topologically, residues 353 to 374 (YATRVPERWMPGKFDIAGHSHQ) are cytoplasmic. The helical transmembrane segment at 375-395 (LFHVLVVAGAYTHYHSGLVYL) threads the bilayer. Residues 396–403 (KWRDVQGC) are Extracellular-facing.

Belongs to the ADIPOR family.

The protein localises to the membrane. In terms of biological role, may play a role in abiotic stress response. In Oryza sativa subsp. japonica (Rice), this protein is Heptahelical transmembrane protein ADIPOR3 (ADIPOR3).